A 91-amino-acid chain; its full sequence is MSRTIFCTFLQRDAEGQDFQLYPGELGKRIYNEISKEAWAQWQKKQTMLINEKKLNMMNPEHRKLLEEEMVNFLFEGKEVHIEGYTPPEQQ.

Belongs to the Fe(2+)-trafficking protein family. As to quaternary structure, monomer.

Its function is as follows. Could be a mediator in iron transactions between iron acquisition and iron-requiring processes, such as synthesis and/or repair of Fe-S clusters in biosynthetic enzymes. This Cronobacter sakazakii (strain ATCC BAA-894) (Enterobacter sakazakii) protein is Probable Fe(2+)-trafficking protein.